We begin with the raw amino-acid sequence, 403 residues long: Large ribosomal subunit protein uL3 (403 aa).

Residues 1–37 (MSHRKFSAPRHGSLGFLPRKRSSRHRGKVKSFPKDDP) form a disordered region. Serine 13 is modified (phosphoserine). The span at 18 to 31 (PRKRSSRHRGKVKS) shows a compositional bias: basic residues. Lysine 39 participates in a covalent cross-link: Glycyl lysine isopeptide (Lys-Gly) (interchain with G-Cter in SUMO2). Lysine 136 carries the post-translational modification N6-acetyllysine. Glycyl lysine isopeptide (Lys-Gly) (interchain with G-Cter in SUMO2) cross-links involve residues lysine 224 and lysine 226. Histidine 245 is modified (tele-methylhistidine). N6-acetyllysine; alternate occurs at positions 286 and 294. A Glycyl lysine isopeptide (Lys-Gly) (interchain with G-Cter in SUMO2); alternate cross-link involves residue lysine 286. A Glycyl lysine isopeptide (Lys-Gly) (interchain with G-Cter in SUMO1); alternate cross-link involves residue lysine 294. Serine 304 carries the post-translational modification Phosphoserine. At lysine 366 the chain carries N6-acetyllysine; alternate. Residue lysine 366 forms a Glycyl lysine isopeptide (Lys-Gly) (interchain with G-Cter in SUMO2); alternate linkage. N6-acetyllysine is present on lysine 373. Glycyl lysine isopeptide (Lys-Gly) (interchain with G-Cter in SUMO2) cross-links involve residues lysine 386, lysine 393, and lysine 399.

It belongs to the universal ribosomal protein uL3 family. In terms of assembly, component of the large ribosomal subunit. Interacts with DHX33. Post-translationally, constitutively monomethylated at His-245 by METTL18. Methylation at His-245 regulates translation elongation by slowing ribosome traversal on tyrosine codons: slower elongation provides enough time for proper folding of synthesized proteins and prevents cellular aggregation of tyrosine-rich proteins. It is not required for incorporation of RPL3 into ribosomes.

Its subcellular location is the nucleus. The protein resides in the nucleolus. The protein localises to the cytoplasm. Its function is as follows. Component of the large ribosomal subunit. The ribosome is a large ribonucleoprotein complex responsible for the synthesis of proteins in the cell. This is Large ribosomal subunit protein uL3 (RPL3) from Homo sapiens (Human).